The chain runs to 1036 residues: Integrin alpha-9 (1036 aa).

The first 28 residues, 1 to 28 (MGGPAAARTGAGGLRALLLALVAAGVPA), serve as a signal peptide directing secretion. The Extracellular portion of the chain corresponds to 29 to 981 (GAYNLDAQRP…NLEPRGYVVG (953 aa)). FG-GAP repeat units lie at residues 36–97 (QRPV…PDRR), 109–175 (RGAP…AKGK), 183–233 (EYKK…NTYF), 234–290 (KLND…SGTL), 291–350 (IKIF…GALE), 352–409 (QLTL…GIVP), and 412–475 (SMKL…LPGS). Cystine bridges form between Cys-88-Cys-98, Cys-143-Cys-163, and Cys-180-Cys-195. Residue Asn-226 is glycosylated (N-linked (GlcNAc...) asparagine). Ca(2+) contacts are provided by Asp-313, Asn-315, Asp-317, Asp-321, Asp-374, Asp-376, Asp-378, Asp-382, Asp-436, Asp-438, Asn-440, and Asp-444. Cysteines 483 and 492 form a disulfide. 2 N-linked (GlcNAc...) asparagine glycosylation sites follow: Asn-494 and Asn-515. 3 disulfide bridges follow: Cys-498/Cys-556, Cys-621/Cys-626, and Cys-697/Cys-707. A glycan (N-linked (GlcNAc...) asparagine) is linked at Asn-808. Intrachain disulfides connect Cys-856–Cys-892 and Cys-899–Cys-904. Residues 982 to 1002 (WIIAISLLVGILIFLLLAVLL) form a helical membrane-spanning segment. The Cytoplasmic portion of the chain corresponds to 1003 to 1036 (WKMGFFRRRYKEIIEAEKNRKENEDGWDWVQKNQ). Positions 1006–1010 (GFFRR) match the GFFKR motif motif.

This sequence belongs to the integrin alpha chain family. As to quaternary structure, heterodimer of an alpha and a beta subunit. Alpha-9 (ITGA9) associates with beta-1 (ITGB1). Integrin ITGA9:ITGB1 interacts with FBLN5 (via N-terminus). Integrin ITGA9:ITGB1 interacts with SPP1/OPN (via N-terminus). Integrin ITGA9:ITGB1 interacts with TNC/TNFN3 (via the 3rd Fibronectin type-III domain). Integrin ITGA9:ITGB1 interacts with SVEP1/polydom (via Sushi domain 21); thereby inhibits Ca(2+) intracellular signaling and as a result represses vasocontraction. Expressed in the media layer of the arterial wall (at protein level). Expressed in the airway epithelium, skeletal muscle, basal keratincytes, the basal epithelium of the cornea, hepatocytes, giant cells in the spleen and smooth muscle of the stomach, duodenum and veins (at protein level).

It is found in the membrane. In terms of biological role, integrin alpha-9/beta-1 (ITGA9:ITGB1) is a receptor for VCAM1, cytotactin and osteopontin. It recognizes the sequence A-E-I-D-G-I-E-L in cytotactin. ITGA9:ITGB1 may play a crucial role in SVEP1/polydom-mediated myoblast cell adhesion. Integrin ITGA9:ITGB1 represses PRKCA-mediated L-type voltage-gated channel Ca(2+) influx and ROCK-mediated calcium sensitivity in vascular smooth muscle cells via its interaction with SVEP1, thereby inhibiting vasocontraction. The sequence is that of Integrin alpha-9 from Mus musculus (Mouse).